Here is a 105-residue protein sequence, read N- to C-terminus: Molt-inhibiting hormone (105 aa).

Residues 1–28 (MYRLAMRTWLAIVIVVVGTSLLFDTASA) form the signal peptide. 3 cysteine pairs are disulfide-bonded: C35-C72, C52-C68, and C55-C81.

Belongs to the arthropod CHH/MIH/GIH/VIH hormone family. In terms of tissue distribution, produced by the medulla terminalis X-organ in the eyestalks and transported to the sinus gland where it is stored and released.

Its subcellular location is the secreted. Inhibits Y-organs where molting hormone (ecdysteroid) is secreted. A molting cycle is initiated when MIH secretion diminishes or stops. Has little or no hyperglycemic activity. The protein is Molt-inhibiting hormone of Penaeus japonicus (Kuruma prawn).